The following is a 259-amino-acid chain: Glutamate 5-kinase (259 aa).

Lys-18 serves as a coordination point for ATP. Substrate contacts are provided by Ser-54, Asp-141, and Asn-153. Position 173–174 (Ser-173–Asp-174) interacts with ATP.

It belongs to the glutamate 5-kinase family.

The protein localises to the cytoplasm. The enzyme catalyses L-glutamate + ATP = L-glutamyl 5-phosphate + ADP. It participates in amino-acid biosynthesis; L-proline biosynthesis; L-glutamate 5-semialdehyde from L-glutamate: step 1/2. Its function is as follows. Catalyzes the transfer of a phosphate group to glutamate to form L-glutamate 5-phosphate. This Clavibacter sepedonicus (Clavibacter michiganensis subsp. sepedonicus) protein is Glutamate 5-kinase.